A 342-amino-acid chain; its full sequence is Ketol-acid reductoisomerase (NADP(+)) (342 aa).

Positions 2–181 (VKVYYNGDIQ…GGARAGVLET (180 aa)) constitute a KARI N-terminal Rossmann domain. NADP(+) is bound by residues 25–28 (YGSQ), Arg48, Ser52, and 82–85 (DEQQ). His107 is an active-site residue. Position 133 (Gly133) interacts with NADP(+). A KARI C-terminal knotted domain is found at 182–327 (TFKEETETDL…RKLREMMPFV (146 aa)). Positions 190, 194, 226, and 230 each coordinate Mg(2+). Residue Ser251 participates in substrate binding.

This sequence belongs to the ketol-acid reductoisomerase family. Requires Mg(2+) as cofactor.

It catalyses the reaction (2R)-2,3-dihydroxy-3-methylbutanoate + NADP(+) = (2S)-2-acetolactate + NADPH + H(+). It carries out the reaction (2R,3R)-2,3-dihydroxy-3-methylpentanoate + NADP(+) = (S)-2-ethyl-2-hydroxy-3-oxobutanoate + NADPH + H(+). The protein operates within amino-acid biosynthesis; L-isoleucine biosynthesis; L-isoleucine from 2-oxobutanoate: step 2/4. It functions in the pathway amino-acid biosynthesis; L-valine biosynthesis; L-valine from pyruvate: step 2/4. Involved in the biosynthesis of branched-chain amino acids (BCAA). Catalyzes an alkyl-migration followed by a ketol-acid reduction of (S)-2-acetolactate (S2AL) to yield (R)-2,3-dihydroxy-isovalerate. In the isomerase reaction, S2AL is rearranged via a Mg-dependent methyl migration to produce 3-hydroxy-3-methyl-2-ketobutyrate (HMKB). In the reductase reaction, this 2-ketoacid undergoes a metal-dependent reduction by NADPH to yield (R)-2,3-dihydroxy-isovalerate. In Bacillus pumilus (strain SAFR-032), this protein is Ketol-acid reductoisomerase (NADP(+)).